The primary structure comprises 72 residues: Long neurotoxin 1 (72 aa).

Intrachain disulfides connect Cys3–Cys21, Cys14–Cys42, Cys27–Cys31, Cys46–Cys57, and Cys58–Cys63.

The protein belongs to the three-finger toxin family. Long-chain subfamily. Type II alpha-neurotoxin sub-subfamily. Expressed by the venom gland.

Its subcellular location is the secreted. In terms of biological role, binds with high affinity to muscular (alpha-1/CHRNA1) and neuronal (alpha-7/CHRNA7) nicotinic acetylcholine receptor (nAChR) and inhibits acetylcholine from binding to the receptor, thereby impairing neuromuscular and neuronal transmission. This is Long neurotoxin 1 from Naja anchietae (Anchieta's cobra).